The primary structure comprises 343 residues: Protein phosphatase 2C homolog 7, mitochondrial (343 aa).

A mitochondrion-targeting transit peptide spans 1–39 (MFANVGFRTLRVSRGPLYGSCSQIISFSKRTFYSSAKSG). In terms of domain architecture, PPM-type phosphatase spans 76–342 (IYQKLKDSIR…DDITVVVVRV (267 aa)). Mn(2+) contacts are provided by Asp-109, Gly-110, and Asp-265.

The cofactor is Mg(2+). Requires Mn(2+) as cofactor.

It localises to the mitochondrion. The enzyme catalyses O-phospho-L-seryl-[protein] + H2O = L-seryl-[protein] + phosphate. The catalysed reaction is O-phospho-L-threonyl-[protein] + H2O = L-threonyl-[protein] + phosphate. In terms of biological role, protein phosphatase which positively regulates biosynthesis of the ubiquinone, coenzyme Q. Dephosphorylates and activates the ubiquinone biosynthesis protein CAT5/COQ7. Also dephosphorylates CIT1 on 'Ser-462', which leads to its activation. This is Protein phosphatase 2C homolog 7, mitochondrial (PTC7) from Saccharomyces cerevisiae (strain ATCC 204508 / S288c) (Baker's yeast).